Reading from the N-terminus, the 108-residue chain is Phosphoribosyl-ATP pyrophosphatase (108 aa).

The protein belongs to the PRA-PH family.

It localises to the cytoplasm. It carries out the reaction 1-(5-phospho-beta-D-ribosyl)-ATP + H2O = 1-(5-phospho-beta-D-ribosyl)-5'-AMP + diphosphate + H(+). It participates in amino-acid biosynthesis; L-histidine biosynthesis; L-histidine from 5-phospho-alpha-D-ribose 1-diphosphate: step 2/9. In Thiobacillus denitrificans (strain ATCC 25259 / T1), this protein is Phosphoribosyl-ATP pyrophosphatase.